The following is a 178-amino-acid chain: MLEGIVRESTGKKATKALRRDGYLIANIYGKDFPNIHAAFKKGDFIRTVRHKEKLAFPVKVGDKELEVVVQEYQKDPVTYDLLHVDLMVAQPGVVTYYMVPIKTVGTPIGLKNKGVLVTSKRRIKVKGAIENIPDSITLDVSNLDVGDAILIRDIELPEGVEHMTAPHVAVVGVVKAK.

Belongs to the bacterial ribosomal protein bL25 family. CTC subfamily. In terms of assembly, part of the 50S ribosomal subunit; part of the 5S rRNA/L5/L18/L25 subcomplex. Contacts the 5S rRNA. Binds to the 5S rRNA independently of L5 and L18.

This is one of the proteins that binds to the 5S RNA in the ribosome where it forms part of the central protuberance. This chain is Large ribosomal subunit protein bL25, found in Nitratiruptor sp. (strain SB155-2).